The following is a 65-amino-acid chain: Large ribosomal subunit protein bL35 (65 aa).

2 stretches are compositionally biased toward basic residues: residues 1-16 and 31-45; these read MPKMKTHRASAKRFKK and HRFHGKTKKQRRQLR. A disordered region spans residues 1–47; that stretch reads MPKMKTHRASAKRFKKTANGGLKSASAYTSHRFHGKTKKQRRQLRGT.

The protein belongs to the bacterial ribosomal protein bL35 family.

The chain is Large ribosomal subunit protein bL35 from Leuconostoc citreum (strain KM20).